Here is a 326-residue protein sequence, read N- to C-terminus: AA9 family lytic polysaccharide monooxygenase B (326 aa).

A signal peptide spans 1-19 (MKSFTIAALAALWAQEAAA). Residues His20 and His98 each coordinate Cu(2+). The cysteines at positions 57 and 192 are disulfide-linked. O2-binding residues include His178 and Gln187. Tyr189 lines the Cu(2+) pocket. Positions 265-281 (PSATLTQPTSTATATSA) are enriched in low complexity. Positions 265–286 (PSATLTQPTSTATATSAPGGGG) are disordered. Residues 289–326 (CTAAKYQQCGGTGYTGCTTCASGSTCSAVSPPYYSQCL) form the CBM1 domain.

This sequence belongs to the polysaccharide monooxygenase AA9 family. The cofactor is Cu(2+).

It localises to the secreted. It catalyses the reaction [(1-&gt;4)-beta-D-glucosyl]n+m + reduced acceptor + O2 = 4-dehydro-beta-D-glucosyl-[(1-&gt;4)-beta-D-glucosyl]n-1 + [(1-&gt;4)-beta-D-glucosyl]m + acceptor + H2O.. In terms of biological role, lytic polysaccharide monooxygenase (LPMO) that depolymerizes crystalline and amorphous polysaccharides via the oxidation of scissile alpha- or beta-(1-4)-glycosidic bonds, yielding C1 and C4 oxidation products. Catalysis by LPMOs requires the reduction of the active-site copper from Cu(II) to Cu(I) by a reducing agent and H(2)O(2) or O(2) as a cosubstrate. Shows no activity on wheat arabinoxylan, konjac glucomannan, acetylated spruce galactoglucomannan, or cellopentaose. The protein is AA9 family lytic polysaccharide monooxygenase B of Thermothielavioides terrestris (strain ATCC 38088 / NRRL 8126) (Thielavia terrestris).